The chain runs to 3746 residues: N-(5-amino-5-carboxypentanoyl)-L-cysteinyl-D-valine synthase (3746 aa).

Positions 299–711 (EEVVERHEDK…GRADFQIKLR (413 aa)) are adenylation (A) domain 1. The region spanning 818 to 895 (DLRGDTEIAL…RMADLLQNKQ (78 aa)) is the Carrier 1 domain. The residue at position 855 (Ser855) is an O-(pantetheine 4'-phosphoryl)serine. Residues 918–1372 (NIYLANSLQQ…YLSSIQLEQL (455 aa)) are condensation (C) domain 1. Residues 1391-1801 (FENEASQKPD…GRNDFQVKIR (411 aa)) form an adenylation (A) domain 2 region. The Carrier 2 domain occupies 1902–1979 (PPRSEIERSL…AQTHLILNDA (78 aa)). Ser1939 is modified (O-(pantetheine 4'-phosphoryl)serine). The interval 1994–2434 (QMIPVSRAQE…SELSAEGINE (441 aa)) is condensation (C) domain 2. The segment at 2478-2883 (AFLAAEKIAV…GRGDLQIKMR (406 aa)) is adenylation (A) domain 3. Residues 2991 to 3066 (PPRNIIEAKM…ALHDHVFMKD (76 aa)) form the Carrier 3 domain. At Ser3026 the chain carries O-(pantetheine 4'-phosphoryl)serine. The epimerase (E) domain stretch occupies residues 3084-3500 (GEAPLLPIQD…NKILDGRASQ (417 aa)). Residues 3530 to 3732 (TLFLLPPGEG…FSWVGNPQQV (203 aa)) are thioesterase (TE) domain.

This sequence belongs to the NRP synthetase family. Requires pantetheine 4'-phosphate as cofactor. Mg(2+) is required as a cofactor.

The protein resides in the cytoplasm. The protein localises to the cytosol. Its subcellular location is the vacuole membrane. It catalyses the reaction L-2-aminoadipate + L-valine + L-cysteine + 3 ATP + H2O = N-[(5S)-5-amino-5-carboxypentanoyl]-L-cysteinyl-D-valine + 3 AMP + 3 diphosphate + 3 H(+). The protein operates within antibiotic biosynthesis; penicillin G biosynthesis; penicillin G from L-alpha-aminoadipate and L-cysteine and L-valine: step 1/3. Its function is as follows. Nonribosomal peptide synthetase; part of the gene cluster that mediates the biosynthesis of penicillin, the world's most important antibiotic. The trimodular NRPS acvA produces the tripeptide N-[(5S)-5-amino-5-carboxypentanoyl]-L-cysteinyl-D-valine (LLD-ACV or ACV) via condensation of the 3 residues L-2-aminoadipate, L-cysteine and L-valine. The precursor amino acids for penicillin biosynthesis are withdrawn from the vacuolar amino acid pool by the MFS-type transporter penV. Each of the constituent amino acids of the tripeptide ACV are activated as aminoacyl-adenylates with peptide bonds formed through the participation of amino acid thioester intermediates. The penicillin biosynthesis occurs via 3 enzymatic steps, the first corresponding to the production of the tripeptide N-[(5S)-5-amino-5-carboxypentanoyl]-L-cysteinyl-D-valine (LLD-ACV or ACV) by the NRPS acvA. The tripeptide ACV is then cyclized to isopenicillin N (IPN) by the isopenicillin N synthase ipnA that forms the beta-lactam nucleus. Finally, the alpha-aminoadipyl side chain is exchanged for phenylacetic acid by the isopenicillin N acyltransferase aatA to yield penicillin in the peroxisomal matrix. This is N-(5-amino-5-carboxypentanoyl)-L-cysteinyl-D-valine synthase from Penicillium chrysogenum (Penicillium notatum).